Reading from the N-terminus, the 424-residue chain is Enolase (424 aa).

Q163 contacts (2R)-2-phosphoglycerate. The active-site Proton donor is the E205. Mg(2+) contacts are provided by D242, E285, and D312. K337, R366, S367, and K388 together coordinate (2R)-2-phosphoglycerate. K337 functions as the Proton acceptor in the catalytic mechanism.

It belongs to the enolase family. It depends on Mg(2+) as a cofactor.

The protein localises to the cytoplasm. It localises to the secreted. It is found in the cell surface. It catalyses the reaction (2R)-2-phosphoglycerate = phosphoenolpyruvate + H2O. It functions in the pathway carbohydrate degradation; glycolysis; pyruvate from D-glyceraldehyde 3-phosphate: step 4/5. Catalyzes the reversible conversion of 2-phosphoglycerate (2-PG) into phosphoenolpyruvate (PEP). It is essential for the degradation of carbohydrates via glycolysis. The chain is Enolase from Dinoroseobacter shibae (strain DSM 16493 / NCIMB 14021 / DFL 12).